The sequence spans 968 residues: RNA polymerase-associated protein RapA (968 aa).

Positions 164-334 (EVGQRHAPRV…FARLRLLDPN (171 aa)) constitute a Helicase ATP-binding domain. 177–184 (DEVGLGKT) serves as a coordination point for ATP. The short motif at 280–283 (DEAH) is the DEAH box element. Positions 490–664 (RVEWLLNYLV…AAPTEQEGLD (175 aa)) constitute a Helicase C-terminal domain.

It belongs to the SNF2/RAD54 helicase family. RapA subfamily. Interacts with the RNAP. Has a higher affinity for the core RNAP than for the holoenzyme. Its ATPase activity is stimulated by binding to RNAP.

Functionally, transcription regulator that activates transcription by stimulating RNA polymerase (RNAP) recycling in case of stress conditions such as supercoiled DNA or high salt concentrations. Probably acts by releasing the RNAP, when it is trapped or immobilized on tightly supercoiled DNA. Does not activate transcription on linear DNA. Probably not involved in DNA repair. This chain is RNA polymerase-associated protein RapA, found in Serratia proteamaculans (strain 568).